A 308-amino-acid polypeptide reads, in one-letter code: tRNA uridine(34) hydroxylase (308 aa).

In terms of domain architecture, Rhodanese spans 129–223 (QEKDTLILDA…YGKHPETQGA (95 aa)). The active-site Cysteine persulfide intermediate is Cys-183.

This sequence belongs to the TrhO family.

It carries out the reaction uridine(34) in tRNA + AH2 + O2 = 5-hydroxyuridine(34) in tRNA + A + H2O. In terms of biological role, catalyzes oxygen-dependent 5-hydroxyuridine (ho5U) modification at position 34 in tRNAs. The polypeptide is tRNA uridine(34) hydroxylase (Onion yellows phytoplasma (strain OY-M)).